The sequence spans 504 residues: DnaJ homolog subfamily C member 3 (504 aa).

Positions 1–31 (MVAPGSVTSRLGSVFPFLLVLVDLQYEGAEC) are cleaved as a signal peptide. TPR repeat units follow at residues 37–70 (VEKH…DPDN), 72–104 (IAYY…KMDF), 105–138 (TAAR…NPSE), 154–187 (MQRL…CVWD), 189–221 (ELRE…KNDN), 222–255 (TEAF…DQDH), 268–301 (LNKL…EPSI), 306–339 (VRSK…EPDN), and 340–373 (VNAL…NEND). C248 and C258 are oxidised to a cystine. Residue S274 is modified to Phosphoserine; by FAM20C. Cysteines 313 and 329 form a disulfide. Positions 375–393 (QIREGLEKAQRLLKQSQKR) are flexible linker. In terms of domain architecture, J spans 394–462 (DYYKILGVKR…EMRKKFDDGE (69 aa)). The disordered stretch occupies residues 451–481 (DPEMRKKFDDGEDPLDAESQQGGGGNPFHRS).

Interacts with EIF2AK4/GCN2; this interaction occurs under endoplasmic reticulum (ER) stress, hypothermic and amino acid starving stress conditions and inhibits EIF2AK4/GCN2 kinase activity. Interacts with EIF2AK3. Interacts with EIF2AK2. Forms a trimeric complex with DNAJB1 and HSPA8. Interacts with THAP12. Widely expressed with high level in the pancreas and testis. Also expressed in cell lines with different levels.

The protein localises to the endoplasmic reticulum. Involved in the unfolded protein response (UPR) during endoplasmic reticulum (ER) stress. Acts as a negative regulator of the EIF2AK4/GCN2 kinase activity by preventing the phosphorylation of eIF-2-alpha at 'Ser-52' and hence attenuating general protein synthesis under ER stress, hypothermic and amino acid starving stress conditions. Co-chaperone of HSPA8/HSC70, it stimulates its ATPase activity. May inhibit both the autophosphorylation of EIF2AK2/PKR and the ability of EIF2AK2 to catalyze phosphorylation of the EIF2A. May inhibit EIF2AK3/PERK activity. The chain is DnaJ homolog subfamily C member 3 (DNAJC3) from Homo sapiens (Human).